The primary structure comprises 207 residues: Small ribosomal subunit protein uS4 (207 aa).

The tract at residues 32-55 (CKLDSKPGQHGRTSGARTSDYGTQ) is disordered. A compositionally biased stretch (polar residues) spans 42-53 (GRTSGARTSDYG). The region spanning 97 to 158 (SRLDNVVYRM…TKKKQARILE (62 aa)) is the S4 RNA-binding domain.

Belongs to the universal ribosomal protein uS4 family. In terms of assembly, part of the 30S ribosomal subunit. Contacts protein S5. The interaction surface between S4 and S5 is involved in control of translational fidelity.

In terms of biological role, one of the primary rRNA binding proteins, it binds directly to 16S rRNA where it nucleates assembly of the body of the 30S subunit. Its function is as follows. With S5 and S12 plays an important role in translational accuracy. In Paraburkholderia phytofirmans (strain DSM 17436 / LMG 22146 / PsJN) (Burkholderia phytofirmans), this protein is Small ribosomal subunit protein uS4.